The primary structure comprises 298 residues: MTYRECVLEVARDDAEALSEALFDLGALSVSVEDADADTPEEQPLFGEPGHEPTRLAWNRSRVVALLAEDADPALLVAAAANEINLSPLPAYTVREVEEQDWVRVTQSQFEPIHIGEHIWVVPSWHDAPEPDAVVLELDPGLAFGTGSHPTTRLCMEWLEQHVHPGERTLDYGCGSGILAIVAKKLGAGETVGVDIDPNAVEASRYNAERNHVEATFALPDDAPEGTFDLVVANILSNPLKLMAAMLCARVRPGGRLILSGVLERQAEEVAAAYASTIPLTVWRARDGWVCLHGVKPT.

4 residues coordinate S-adenosyl-L-methionine: Thr152, Gly173, Asp195, and Asn234.

This sequence belongs to the methyltransferase superfamily. PrmA family.

It localises to the cytoplasm. It catalyses the reaction L-lysyl-[protein] + 3 S-adenosyl-L-methionine = N(6),N(6),N(6)-trimethyl-L-lysyl-[protein] + 3 S-adenosyl-L-homocysteine + 3 H(+). In terms of biological role, methylates ribosomal protein L11. This is Ribosomal protein L11 methyltransferase from Ralstonia pickettii (strain 12J).